Here is a 295-residue protein sequence, read N- to C-terminus: MTWQIVFVVICVIVAGVAALFWRLPSDDTTRSRAKTVTIAAVAAAAVFFFLGCFTIVGTRQFAIMTTFGRPTGVSLNNGFHGKWPWQMTHPMDGAVQIDKYVKEGNTDQRITVRLGNQSTALADVSIRWQLKQAAAPELFQQYKTFDNVRVNLIERNLSVALNEVFAGFNPLDPRNLDVSPLPSLAKRAADILRQDVGGQVDIFDVNVPTIQYDQSTEDKINQLNQQRAQTSIALEAQRTAEAQAKANEILSRSISDDPNVVVQNCITAAINKGISPLGCWPGSSALPTIAVPGR.

The next 2 membrane-spanning stretches (helical) occupy residues Thr2 to Trp22 and Val37 to Val57.

Its subcellular location is the cell membrane. The protein localises to the secreted. It localises to the cell wall. Protease that triggers late cell apoptosis and contributes to the pathogenicity and dissemination of M.tuberculosis. In a mouse model of infection, can induce hepatocyte and lung cell apoptosis and cause pathological damage to the spleen, liver and lungs. Specifically stimulates the secretion of inflammatory cytokines including TNF-alpha, IL-6 and IL-1 beta. Can degrade casein in vitro. The chain is Protease Rv3090 from Mycobacterium tuberculosis (strain ATCC 25618 / H37Rv).